The sequence spans 166 residues: MVMKKIIMTNFNCDNCGDCVKACMEKNKVGRIAIMEKDGKYIPIVCQHCASAPCKEVCPVSAIEHKDGYVYLNEDVCIGCGLCALACPFGAILMEDKAYKCILCNGDEPACVKACSKRCLELVDVNELIFAKRDKSLDLFSKMSLPTQKSDNSLISKITIDAKVKP.

3 4Fe-4S ferredoxin-type domains span residues 3–33 (MKKI…GRIA), 37–67 (KDGK…EHKD), and 68–97 (GYVY…MEDK). [4Fe-4S] cluster is bound by residues Cys-13, Cys-16, Cys-19, Cys-23, Cys-46, Cys-49, Cys-54, Cys-58, Cys-77, Cys-80, Cys-83, Cys-87, Cys-101, Cys-104, Cys-111, and Cys-115.

[4Fe-4S] cluster is required as a cofactor.

This is an uncharacterized protein from Methanocaldococcus jannaschii (strain ATCC 43067 / DSM 2661 / JAL-1 / JCM 10045 / NBRC 100440) (Methanococcus jannaschii).